The primary structure comprises 1277 residues: DNA repair protein RAD5B (1277 aa).

The disordered stretch occupies residues 271–293; that stretch reads KLEQENDDLFSSGDSDGTSAKRR. The Helicase ATP-binding domain maps to 674 to 871; the sequence is PTATQMARGG…YSLLCFLHVE (198 aa). Residue 687-694 coordinates ATP; the sequence is DAMGLGKT. Positions 822–825 match the DEAH box motif; sequence DEAH. Residues 1040-1080 form an RING-type zinc finger; that stretch reads CPICLESADDPVLTPCAHRMCRECLLTSWRSPSCGLCPICR. Residues 1113–1277 form the Helicase C-terminal domain; sequence ELLKCLEKIK…RLEELKMLFR (165 aa).

Belongs to the SNF2/RAD54 helicase family. RAD16 subfamily.

The protein localises to the nucleus. Possesses intrinsic ATP-dependent nucleosome-remodeling activity. This activity may be required for DNA repair. Does not seem to be required for DNA repair and regulation of homologous recombination (HR). The protein is DNA repair protein RAD5B of Arabidopsis thaliana (Mouse-ear cress).